A 147-amino-acid chain; its full sequence is Large ribosomal subunit protein uL11 (147 aa).

It belongs to the universal ribosomal protein uL11 family. In terms of assembly, part of the ribosomal stalk of the 50S ribosomal subunit. Interacts with L10 and the large rRNA to form the base of the stalk. L10 forms an elongated spine to which L12 dimers bind in a sequential fashion forming a multimeric L10(L12)X complex. Post-translationally, one or more lysine residues are methylated.

Forms part of the ribosomal stalk which helps the ribosome interact with GTP-bound translation factors. This chain is Large ribosomal subunit protein uL11, found in Thermus thermophilus (strain ATCC BAA-163 / DSM 7039 / HB27).